We begin with the raw amino-acid sequence, 520 residues long: MTEISMLKDVQKIIVLDYGSQYNQLIARRIREFGVFSELKSHKITAQEIREINPIGIVLSGGPNSVYADNAFGIDPEIFELGIPILGICYGMQLITDQLGGKVVPAGQAGNREYGQSTLNIRTASKLFADTPDEQLVLMSHGDAVTEIPDGFHLVGDSNDCPYAAIENSEKHIYGIQFHPEVRHSVYGNDILRNFAIFICGARGDWSMDNFIDMQIEKIRETVGDKKVLLGLSGGVDSSVVGVLLQKAIGDQLTCIFVDHGLLRKDEGDQVMGMLGGKFGLNIIRVDAKDRFLELLAGVDDPEKKRKIIGNEFVYVFDDEASKLKGVDFLAQGTLYTDIIESGTETAQTIKSHHNVGGLPEDMQFQLIEPLNTLFKDEVRELGIALGMPENIVWRQPFPGPGLAIRVMGAITEEKLETVRESDAILREEIAKAGLDRDVWQYFTVNTGVRSVGVMGDGRTYDYTIAIRAITSIDGMTADFAQLPWDVLKKISTRIVNEVDHVNRIVYDITSKPPATVEWE.

A Glutamine amidotransferase type-1 domain is found at 12–205; sequence KIIVLDYGSQ…AIFICGARGD (194 aa). Catalysis depends on C89, which acts as the Nucleophile. Active-site residues include H179 and E181. Positions 206–395 constitute a GMPS ATP-PPase domain; it reads WSMDNFIDMQ…LGMPENIVWR (190 aa). Residue 233–239 coordinates ATP; the sequence is SGGVDSS.

In terms of assembly, homodimer.

It carries out the reaction XMP + L-glutamine + ATP + H2O = GMP + L-glutamate + AMP + diphosphate + 2 H(+). It functions in the pathway purine metabolism; GMP biosynthesis; GMP from XMP (L-Gln route): step 1/1. Functionally, catalyzes the synthesis of GMP from XMP. In Streptococcus uberis (strain ATCC BAA-854 / 0140J), this protein is GMP synthase [glutamine-hydrolyzing].